A 1294-amino-acid chain; its full sequence is uncharacterized protein (1294 aa).

This is an uncharacterized protein from Schizosaccharomyces pombe (strain 972 / ATCC 24843) (Fission yeast).